The primary structure comprises 422 residues: ATP-dependent Clp protease ATP-binding subunit ClpX 1 (422 aa).

A ClpX-type ZB domain is found at 4 to 57 (DRKNRESGKLLYCSFCGKSQHEVRKLIAGPAVFVCDECVELCNDIIREDLQGSE). Positions 16, 19, 38, and 41 each coordinate Zn(2+). 120-127 (PTGSGKTL) lines the ATP pocket.

Belongs to the ClpX chaperone family. As to quaternary structure, component of the ClpX-ClpP complex. Forms a hexameric ring that, in the presence of ATP, binds to fourteen ClpP subunits assembled into a disk-like structure with a central cavity, resembling the structure of eukaryotic proteasomes.

Its function is as follows. ATP-dependent specificity component of the Clp protease. It directs the protease to specific substrates. Can perform chaperone functions in the absence of ClpP. This is ATP-dependent Clp protease ATP-binding subunit ClpX 1 from Methylococcus capsulatus (strain ATCC 33009 / NCIMB 11132 / Bath).